Reading from the N-terminus, the 1700-residue chain is Ras-responsive element-binding protein 1 (1700 aa).

The disordered stretch occupies residues 31-63 (TENGGSPQGIKSPMKPPGPNRIGRRNQETKEEK). S36 and S42 each carry phosphoserine. 3 consecutive C2H2-type zinc fingers follow at residues 66-88 (YNCP…IRQH), 97-119 (HACS…MLVH), and 125-147 (YKCT…MKIH). The segment at 146 to 195 (IHEKDTNSTTAAAPPSPLKRRRLSSKRKLSHDAESEDPGPAKKMVEDGQS) is disordered. S161 carries the phosphoserine modification. Over residues 163–174 (LKRRRLSSKRKL) the composition is skewed to basic residues. Phosphoserine is present on residues S175 and S180. The segment covering 184-195 (GPAKKMVEDGQS) has biased composition (basic and acidic residues). A C2H2-type 4 zinc finger spans residues 206 to 228 (FHCPVCFKEFVCKYELETHMETH). A Phosphoserine modification is found at S229. C2H2-type zinc fingers lie at residues 233–256 (LRCD…ALVH) and 314–336 (FVCD…RQSH). Residues K433, K500, K549, K564, K591, and K611 each participate in a glycyl lysine isopeptide (Lys-Gly) (interchain with G-Cter in SUMO2) cross-link. A Glycyl lysine isopeptide (Lys-Gly) (interchain with G-Cter in SUMO1); alternate cross-link involves residue K613. K613 is covalently cross-linked (Glycyl lysine isopeptide (Lys-Gly) (interchain with G-Cter in SUMO2); alternate). A Glycyl lysine isopeptide (Lys-Gly) (interchain with G-Cter in SUMO2) cross-link involves residue K622. 5 consecutive C2H2-type zinc fingers follow at residues 641–663 (YPCR…VRSH), 669–691 (YQCN…IRTH), 697–720 (YICK…RKKH), 751–782 (TVCR…GGCH), and 788–813 (FECK…QHLH). Glycyl lysine isopeptide (Lys-Gly) (interchain with G-Cter in SUMO2) cross-links involve residues K855, K883, and K911. Disordered stretches follow at residues 939–991 (IPKS…SLET) and 1092–1177 (ADPG…AVDL). Residues 944-961 (KKGDKDTVVPSDAKKPEP) are compositionally biased toward basic and acidic residues. At S970 the chain carries Phosphoserine. A compositionally biased stretch (polar residues) spans 1097–1111 (SITSSNTVATDSPGS). A phosphoserine mark is found at S1125, S1137, and S1138. A compositionally biased stretch (low complexity) spans 1137 to 1146 (SSPEEALPTE). Positions 1155–1165 (SRKRGRKRGLR) are enriched in basic residues. A phosphoserine mark is found at S1172, S1179, S1180, and S1230. Disordered regions lie at residues 1195-1235 (TNKF…AEDR), 1273-1368 (HTDS…QSLD), 1383-1521 (SEAG…RKKV), and 1564-1670 (VRHQ…SPAA). The segment at 1251–1273 (INCPHCPRVFPWASSLQRHMLTH) adopts a C2H2-type 12 zinc-finger fold. The segment covering 1273-1285 (HTDSQSDTDTLTT) has biased composition (low complexity). The span at 1327-1346 (SEEEEEKETEENPEPEEECR) shows a compositional bias: acidic residues. The C2H2-type 13 zinc finger occupies 1400–1422 (HACDTCGKNFKFLGTLSRHKKAH). S1450 and S1452 each carry phosphoserine. Over residues 1492–1507 (TAEKRGDGDKRPKTDS) the composition is skewed to basic and acidic residues. C2H2-type zinc fingers lie at residues 1520–1542 (KVCS…MRSH) and 1548–1570 (YKCQ…QRIH). Residues 1564–1580 (VRHQRIHQKARHSKHHG) are compositionally biased toward basic residues. S1593 and S1606 each carry phosphoserine. The span at 1645 to 1660 (AEQAAEPSAPKEQASP) shows a compositional bias: low complexity. S1667 is subject to Phosphoserine.

This sequence belongs to the krueppel C2H2-type zinc-finger protein family. In terms of assembly, interacts with NEUROD1. Interacts with AR. In terms of tissue distribution, expressed in splenic B-cells.

Its subcellular location is the nucleus speckle. Functionally, transcription factor that binds specifically to the RAS-responsive elements (RRE) of gene promoters. Represses the angiotensinogen gene. Negatively regulates the transcriptional activity of AR. Potentiates the transcriptional activity of NEUROD1. Binds specifically to the allelic variant of the CDKN2A promoter present in Balb/c mice, which leads to a down-regulation of CDKN2A expression in this strain, and, as a consequence, to an elevated susceptibility to pristane-induced tumors. Promotes brown adipocyte differentiation. May be involved in Ras/Raf-mediated cell differentiation by enhancing calcitonin expression. This Mus musculus (Mouse) protein is Ras-responsive element-binding protein 1 (Rreb1).